A 146-amino-acid chain; its full sequence is UPF0178 protein BCAH187_A3092 (146 aa).

Belongs to the UPF0178 family.

The polypeptide is UPF0178 protein BCAH187_A3092 (Bacillus cereus (strain AH187)).